The primary structure comprises 130 residues: Small ribosomal subunit protein uS11 (130 aa).

The protein belongs to the universal ribosomal protein uS11 family. In terms of assembly, part of the 30S ribosomal subunit. Interacts with proteins S7 and S18. Binds to IF-3.

In terms of biological role, located on the platform of the 30S subunit, it bridges several disparate RNA helices of the 16S rRNA. Forms part of the Shine-Dalgarno cleft in the 70S ribosome. The protein is Small ribosomal subunit protein uS11 of Prochlorococcus marinus (strain MIT 9313).